The primary structure comprises 213 residues: LexA repressor (213 aa).

Residues 31–51 constitute a DNA-binding region (H-T-H motif); sequence RAEISRELGFRSPNAAEEYLK. Active-site for autocatalytic cleavage activity residues include Ser-129 and Lys-166.

Belongs to the peptidase S24 family. In terms of assembly, homodimer.

It carries out the reaction Hydrolysis of Ala-|-Gly bond in repressor LexA.. Functionally, represses a number of genes involved in the response to DNA damage (SOS response), including recA and lexA. In the presence of single-stranded DNA, RecA interacts with LexA causing an autocatalytic cleavage which disrupts the DNA-binding part of LexA, leading to derepression of the SOS regulon and eventually DNA repair. This chain is LexA repressor, found in Mannheimia succiniciproducens (strain KCTC 0769BP / MBEL55E).